The following is a 509-amino-acid chain: uncharacterized protein (509 aa).

Residues 1–32 (MMLPKRNIIHFLRKRAIFIVAAFIALLTVDYS) form the signal peptide.

The protein localises to the endoplasmic reticulum. This is an uncharacterized protein from Schizosaccharomyces pombe (strain 972 / ATCC 24843) (Fission yeast).